Reading from the N-terminus, the 178-residue chain is Nascent polypeptide-associated complex subunit alpha (178 aa).

An NAC-A/B domain is found at Ser-20 to Ile-84. A compositionally biased stretch (low complexity) spans Ala-87–Ala-104. Residues Ala-87–Ser-142 are disordered. A compositionally biased stretch (polar residues) spans Glu-112–Ser-122. The span at Thr-127–Gly-139 shows a compositional bias: acidic residues. A UBA domain is found at Leu-140 to Ser-178.

This sequence belongs to the NAC-alpha family. As to quaternary structure, part of the nascent polypeptide-associated complex (NAC), consisting of EGD2 and EGD1. NAC associates with ribosomes via EGD1.

Its subcellular location is the cytoplasm. The protein resides in the nucleus. Its function is as follows. Component of the nascent polypeptide-associated complex (NAC), a dynamic component of the ribosomal exit tunnel, protecting the emerging polypeptides from interaction with other cytoplasmic proteins to ensure appropriate nascent protein targeting. The NAC complex also promotes mitochondrial protein import by enhancing productive ribosome interactions with the outer mitochondrial membrane and blocks the inappropriate interaction of ribosomes translating non-secretory nascent polypeptides with translocation sites in the membrane of the endoplasmic reticulum. EGD2 may also be involved in transcription regulation. This Meyerozyma guilliermondii (strain ATCC 6260 / CBS 566 / DSM 6381 / JCM 1539 / NBRC 10279 / NRRL Y-324) (Yeast) protein is Nascent polypeptide-associated complex subunit alpha (EGD2).